The following is a 371-amino-acid chain: Putative RNA-binding protein Luc7-like 1 (371 aa).

Coiled-coil stretches lie at residues 87-177 (MDHL…RNSM) and 218-259 (FIQI…LSRR). Residues 232-257 (VAEKQEKRNQDRLRRREEREREERLS) are compositionally biased toward basic and acidic residues. The segment at 232-371 (VAEKQEKRNQ…RSEEKEAGEI (140 aa)) is disordered. A compositionally biased stretch (basic residues) spans 258-317 (RRSGSRTRDRRRSRSRDRRRRRSRSTSRERRKLSRSRSRDRHRRHRSRSRSHSRGHRRAS). Composition is skewed to basic and acidic residues over residues 318-351 (RDRSAKYKFSRERASREESWESGRSERGPPDWRL) and 361-371 (RRSEEKEAGEI). Phosphoserine occurs at positions 332, 336, and 363.

The protein belongs to the Luc7 family. In terms of tissue distribution, ubiquitous.

Functionally, may bind to RNA via its Arg/Ser-rich domain. The polypeptide is Putative RNA-binding protein Luc7-like 1 (LUC7L) (Homo sapiens (Human)).